We begin with the raw amino-acid sequence, 205 residues long: Small ribosomal subunit protein uS7 (205 aa).

The protein belongs to the universal ribosomal protein uS7 family. Part of the 30S ribosomal subunit.

Functionally, one of the primary rRNA binding proteins, it binds directly to 16S rRNA where it nucleates assembly of the head domain of the 30S subunit. Is located at the subunit interface close to the decoding center. The sequence is that of Small ribosomal subunit protein uS7 from Aeropyrum pernix (strain ATCC 700893 / DSM 11879 / JCM 9820 / NBRC 100138 / K1).